A 91-amino-acid polypeptide reads, in one-letter code: Elongation factor 1-beta (91 aa).

The protein belongs to the EF-1-beta/EF-1-delta family.

Functionally, promotes the exchange of GDP for GTP in EF-1-alpha/GDP, thus allowing the regeneration of EF-1-alpha/GTP that could then be used to form the ternary complex EF-1-alpha/GTP/AAtRNA. This is Elongation factor 1-beta from Thermococcus onnurineus (strain NA1).